A 148-amino-acid polypeptide reads, in one-letter code: Transcriptional regulator MraZ (148 aa).

2 SpoVT-AbrB domains span residues 5 to 53 and 82 to 125; these read ETAI…AEKE and SAVL…SEQA.

Belongs to the MraZ family. In terms of assembly, forms oligomers.

The protein resides in the cytoplasm. It localises to the nucleoid. The sequence is that of Transcriptional regulator MraZ from Xanthomonas axonopodis pv. citri (strain 306).